A 436-amino-acid polypeptide reads, in one-letter code: GTPase Der (436 aa).

EngA-type G domains are found at residues 4 to 167 (PTVA…PVEE) and 175 to 351 (IRFS…ESQN). Residues 10–17 (GRPNVGKS), 57–61 (DTGGI), 119–122 (NKVD), 181–188 (GRPNVGKS), 229–233 (DTAGM), and 294–297 (NKWD) contribute to the GTP site. The KH-like domain occupies 352 to 436 (KRIPSAVLND…PINLIARKRK (85 aa)).

The protein belongs to the TRAFAC class TrmE-Era-EngA-EngB-Septin-like GTPase superfamily. EngA (Der) GTPase family. In terms of assembly, associates with the 50S ribosomal subunit.

Functionally, GTPase that plays an essential role in the late steps of ribosome biogenesis. The sequence is that of GTPase Der from Streptococcus agalactiae serotype III (strain NEM316).